The following is a 109-amino-acid chain: Small ribosomal subunit protein uS15c (109 aa).

Belongs to the universal ribosomal protein uS15 family. As to quaternary structure, part of the 30S ribosomal subunit.

The protein resides in the plastid. It is found in the chloroplast. The polypeptide is Small ribosomal subunit protein uS15c (rps15-A) (Trachelium caeruleum (Blue throatwort)).